The chain runs to 22 residues: Unknown protein 10 (22 aa).

This chain is Unknown protein 10, found in Pseudotsuga menziesii (Douglas-fir).